The following is a 589-amino-acid chain: Zinc finger protein 703 (589 aa).

The interval 102–315 (SQIGKPDPPP…GTGHIAPVSP (214 aa)) is disordered. Residues 113–122 (SKLGSLSSSS) are compositionally biased toward low complexity. Basic and acidic residues predominate over residues 137–148 (SGEHQNLDDKSS). A compositionally biased stretch (polar residues) spans 179-188 (NGSSSSVTCT). Over residues 196 to 206 (SPRASSPQQTS) the composition is skewed to low complexity. Polar residues predominate over residues 214–230 (QSQSPLSQKTAHLQTTH). Over residues 237-250 (GSDPGNDSSSSGSD) the composition is skewed to low complexity. Positions 251 to 262 (RNGKKDSDHNKS) are enriched in basic and acidic residues. Positions 272–299 (SSHARASVNSSSASSSSSPQPDSKTDSQ) are enriched in low complexity. A required for interaction with Groucho and hdac2 plays an important role in repression of transcription region spans residues 408-460 (VHDPSSALKSGFPLMYPTHHLHSLHPSSLSSSATSSLSHPLYTYGFMLPNETL). The segment at 462–490 (HACNWVSVGGPCDKRFATSEELLAHLRTH) adopts a C2H2-type zinc-finger fold. The required for self-association and nuclear localization stretch occupies residues 498–589 (GKLLSGYPSS…LGSASALGYQ (92 aa)).

This sequence belongs to the Elbow/Noc family. Self-associates. Interacts with nlz2. May interact with Groucho corepressor proteins.

Its subcellular location is the nucleus. The protein localises to the cytoplasm. Functionally, transcriptional corepressor which does not bind directly to DNA and may regulate transcription through recruitment of histone deacetylases to gene promoters. Required for segmental gene expression during hindbrain development. May regulate cell adhesion, migration and proliferation. The sequence is that of Zinc finger protein 703 (znf703) from Danio rerio (Zebrafish).